Reading from the N-terminus, the 1042-residue chain is Aldehyde reductase lnaA (1042 aa).

Residues 29 to 425 form an adenylation (A) domain region; the sequence is HAFLNPSAMA…GRRDHQVKVR (397 aa). The region spanning 532-609 is the Carrier domain; that stretch reads DNEDSTRGKL…RLAGILEERI (78 aa). An O-(pantetheine 4'-phosphoryl)serine modification is found at S569. Residues 655 to 897 are short-chain dehydrogenase/reductase (R) domain; that stretch reads LTGATGFVGS…FVPVDYVNAV (243 aa).

It belongs to the NRP synthetase family.

It catalyses the reaction L-tyrosinal + AMP + diphosphate + NADP(+) = L-tyrosine + ATP + NADPH + H(+). The protein operates within secondary metabolite biosynthesis. Non-canonical nonribosomal peptide synthetase; part of the lna gene cluster that mediates the biosynthesis of diastereomeric piperazines. Lna and lnb clusters encode sets of enzymes that produce overlapping sets of previously undescribed metabolites such as piperazinomycin-like metabolites or morpholine. The lna and lnb biosynthetic pathways appear to be part of a signaling network that controls the formation of sclerotia, a resilient overwintering structure. One primary function of the non-canonical nonribosomal peptide synthetases lnaA and lnbA consists in the reduction of L-tyrosine. The presence in the clusters of tailoring enzymes such as the oxidoreductases lnaB, lnbB, lnaE or lnbE, as well as of the cytochrome P450 monooxygenases lnaC, lnaD, or lnbC, might explain formation of various diastereomeric piperazines. In Aspergillus flavus (strain ATCC 200026 / FGSC A1120 / IAM 13836 / NRRL 3357 / JCM 12722 / SRRC 167), this protein is Aldehyde reductase lnaA.